The following is a 143-amino-acid chain: Large-conductance mechanosensitive channel (143 aa).

2 consecutive transmembrane segments (helical) span residues 10-30 (FAVK…GAFS) and 89-109 (GSFI…FLMV).

It belongs to the MscL family. In terms of assembly, homopentamer.

It localises to the cell inner membrane. Its function is as follows. Channel that opens in response to stretch forces in the membrane lipid bilayer. May participate in the regulation of osmotic pressure changes within the cell. This Burkholderia vietnamiensis (strain G4 / LMG 22486) (Burkholderia cepacia (strain R1808)) protein is Large-conductance mechanosensitive channel.